We begin with the raw amino-acid sequence, 366 residues long: Carbamoyl phosphate synthase small chain (366 aa).

Positions 1–170 (MLKKRYLVLE…TKSPYVSTGY (170 aa)) are CPSase. The L-glutamine site is built by S47, G221, and G223. Residues 173–360 (SVVLVDFGKK…IDMINEYKTK (188 aa)) form the Glutamine amidotransferase type-1 domain. C248 acts as the Nucleophile in catalysis. Residues L249, Q252, N290, G292, and Y293 each contribute to the L-glutamine site. Catalysis depends on residues H333 and E335.

This sequence belongs to the CarA family. As to quaternary structure, composed of two chains; the small (or glutamine) chain promotes the hydrolysis of glutamine to ammonia, which is used by the large (or ammonia) chain to synthesize carbamoyl phosphate. Tetramer of heterodimers (alpha,beta)4.

It carries out the reaction hydrogencarbonate + L-glutamine + 2 ATP + H2O = carbamoyl phosphate + L-glutamate + 2 ADP + phosphate + 2 H(+). The enzyme catalyses L-glutamine + H2O = L-glutamate + NH4(+). It functions in the pathway amino-acid biosynthesis; L-arginine biosynthesis; carbamoyl phosphate from bicarbonate: step 1/1. It participates in pyrimidine metabolism; UMP biosynthesis via de novo pathway; (S)-dihydroorotate from bicarbonate: step 1/3. In terms of biological role, small subunit of the glutamine-dependent carbamoyl phosphate synthetase (CPSase). CPSase catalyzes the formation of carbamoyl phosphate from the ammonia moiety of glutamine, carbonate, and phosphate donated by ATP, constituting the first step of 2 biosynthetic pathways, one leading to arginine and/or urea and the other to pyrimidine nucleotides. The small subunit (glutamine amidotransferase) binds and cleaves glutamine to supply the large subunit with the substrate ammonia. The sequence is that of Carbamoyl phosphate synthase small chain from Staphylococcus saprophyticus subsp. saprophyticus (strain ATCC 15305 / DSM 20229 / NCIMB 8711 / NCTC 7292 / S-41).